A 180-amino-acid chain; its full sequence is Stathmin-3 (180 aa).

S-palmitoyl cysteine attachment occurs at residues Cys22 and Cys24. The SLD domain maps to 38–180; the sequence is GDMEVKQLDK…NKEQREEMSG (143 aa). Phosphoserine is present on residues Ser50, Ser60, Ser65, Ser68, Ser72, Ser73, and Ser81. Over residues 60-74 the composition is skewed to low complexity; that stretch reads SPSDLSPESPVLSSP. The tract at residues 60–81 is disordered; the sequence is SPSDLSPESPVLSSPPKRKDAS. A coiled-coil region spans residues 75 to 179; it reads PKRKDASLEE…RNKEQREEMS (105 aa).

It belongs to the stathmin family. As to quaternary structure, interacts with STAT3. Interacts with CLU (secreted form); this interaction may act as an important modulator during neuronal differentiation. In terms of processing, N-terminal palmitoylation promotes specific anchoring to the cytosolic leaflet of Golgi membranes and subsequent vesicular trafficking along dendrites and axons. Neuronal Stathmins are substrates for palmitoyltransferases ZDHHC3, ZDHHC7 and ZDHHC15. Neuron specific.

Its subcellular location is the golgi apparatus. It localises to the cell projection. It is found in the growth cone. The protein resides in the axon. The protein localises to the cytoplasm. Its subcellular location is the cytosol. In terms of biological role, exhibits microtubule-destabilizing activity, which is antagonized by STAT3. In Mus musculus (Mouse), this protein is Stathmin-3 (Stmn3).